The sequence spans 344 residues: 2-aminoethylphosphonate--pyruvate transaminase (344 aa).

Residue lysine 194 is modified to N6-(pyridoxal phosphate)lysine.

It belongs to the class-V pyridoxal-phosphate-dependent aminotransferase family. PhnW subfamily. In terms of assembly, homodimer. It depends on pyridoxal 5'-phosphate as a cofactor.

The catalysed reaction is (2-aminoethyl)phosphonate + pyruvate = phosphonoacetaldehyde + L-alanine. Functionally, involved in phosphonate degradation. The chain is 2-aminoethylphosphonate--pyruvate transaminase from Bacillus cereus.